A 532-amino-acid polypeptide reads, in one-letter code: 2,3-bisphosphoglycerate-independent phosphoglycerate mutase (532 aa).

Positions 15 and 65 each coordinate Mn(2+). Ser-65 (phosphoserine intermediate) is an active-site residue. Substrate contacts are provided by residues His-126, 156–157 (RD), Arg-188, Arg-194, 258–261 (RPDR), and Lys-331. Asp-398, His-402, Asp-439, His-440, and His-457 together coordinate Mn(2+).

The protein belongs to the BPG-independent phosphoglycerate mutase family. In terms of assembly, monomer. The cofactor is Mn(2+).

It carries out the reaction (2R)-2-phosphoglycerate = (2R)-3-phosphoglycerate. Its pathway is carbohydrate degradation; glycolysis; pyruvate from D-glyceraldehyde 3-phosphate: step 3/5. Its function is as follows. Catalyzes the interconversion of 2-phosphoglycerate and 3-phosphoglycerate. This is 2,3-bisphosphoglycerate-independent phosphoglycerate mutase from Synechocystis sp. (strain ATCC 27184 / PCC 6803 / Kazusa).